A 177-amino-acid polypeptide reads, in one-letter code: Probable DNA-directed RNA polymerase subunit delta (177 aa).

In terms of domain architecture, HTH HARE-type spans 14–81 (CSMIEVVHSV…GENRWGLRSW (68 aa)). Positions 91 to 177 (ILPQPKPKKK…DETEEEEEEL (87 aa)) are disordered. Positions 106–177 (DGFDDYIEED…DETEEEEEEL (72 aa)) are enriched in acidic residues.

The protein belongs to the RpoE family. As to quaternary structure, RNAP is composed of a core of 2 alpha, a beta and a beta' subunits. The core is associated with a delta subunit and one of several sigma factors.

Functionally, participates in both the initiation and recycling phases of transcription. In the presence of the delta subunit, RNAP displays an increased specificity of transcription, a decreased affinity for nucleic acids, and an increased efficiency of RNA synthesis because of enhanced recycling. The sequence is that of Probable DNA-directed RNA polymerase subunit delta from Bacillus cereus (strain G9842).